The primary structure comprises 60 residues: Prophage outer membrane lipoprotein RzoD (60 aa).

The first 19 residues, 1 to 19 (MRKLKMMLCVMMLPLVVVG), serve as a signal peptide directing secretion. Cysteine 20 carries N-palmitoyl cysteine lipidation. Cysteine 20 carries the S-diacylglycerol cysteine lipid modification.

Belongs to the lambdalikevirus o-spanin family. As to quaternary structure, homodimer; disulfide-linked. Interacts (via C-terminus) with RZ (via C-terminus). Part of the spanin complex which spans the entire periplasmic space. The spanin complex is composed of spanin, inner membrane subunit and spanin, outer membrane subunit.

The protein localises to the cell outer membrane. Component of the spanin complex that disrupts the outer membrane and causes cell lysis during virus exit. The spanin complex conducts the final step in cell lysis by disrupting the outer membrane after holin and endolysin action have permeabilized the inner membrane and degraded the host peptidoglycans. This is Prophage outer membrane lipoprotein RzoD (rzoD) from Escherichia coli (strain K12).